A 158-amino-acid polypeptide reads, in one-letter code: Egg cell-secreted protein 1.1 (158 aa).

A signal peptide spans 1-27 (MASKSSFMATFNIVTLMLMVASSTVTA). Residue N122 is glycosylated (N-linked (GlcNAc...) asparagine).

It belongs to the plant egg cell-secreted peptide family. Restricted to female reproductive tissues, specifically accumulating in storage vesicles of the unfertilized egg cell.

The protein resides in the cytoplasmic vesicle. It localises to the secreted. Involved in the regulation of gamete interactions during the double fertilization and to prevent multiple-pollen tube attraction; mediates the redistribution of the gamete fusogen HAP2/GCS1 to the cell surface after secretion upon sperm arrival. This is Egg cell-secreted protein 1.1 (EC1.1) from Arabidopsis thaliana (Mouse-ear cress).